The sequence spans 396 residues: Cystathionine beta-lyase (396 aa).

Lys214 carries the post-translational modification N6-(pyridoxal phosphate)lysine.

It belongs to the trans-sulfuration enzymes family. In terms of assembly, homodimer. Requires pyridoxal 5'-phosphate as cofactor.

Its subcellular location is the cytoplasm. It carries out the reaction L,L-cystathionine + H2O = L-homocysteine + pyruvate + NH4(+). The catalysed reaction is an S-substituted L-cysteine + H2O = a thiol + pyruvate + NH4(+). It functions in the pathway amino-acid biosynthesis; L-methionine biosynthesis via de novo pathway; L-homocysteine from L-cystathionine: step 1/1. Its function is as follows. Catalyzes the cleavage of cystathionine to homocysteine, pyruvate and ammonia during methionine biosynthesis. Also has cytotoxic activity toward osteogenic, osteosarcoma and tracheal cells, in vitro. The chemical basis for cell toxicity might be the formation and subsequent transfer of sulfane-sulfur to proteins, derived via beta-cystathionase cleavage of L-cystine. The sequence is that of Cystathionine beta-lyase (metC) from Bordetella avium.